A 68-amino-acid polypeptide reads, in one-letter code: DNA-directed RNA polymerase subunit omega (68 aa).

The protein belongs to the RNA polymerase subunit omega family. The RNAP catalytic core consists of 2 alpha, 1 beta, 1 beta' and 1 omega subunit. When a sigma factor is associated with the core the holoenzyme is formed, which can initiate transcription.

The catalysed reaction is RNA(n) + a ribonucleoside 5'-triphosphate = RNA(n+1) + diphosphate. Promotes RNA polymerase assembly. Latches the N- and C-terminal regions of the beta' subunit thereby facilitating its interaction with the beta and alpha subunits. This is DNA-directed RNA polymerase subunit omega from Nitrosospira multiformis (strain ATCC 25196 / NCIMB 11849 / C 71).